Reading from the N-terminus, the 350-residue chain is Hydroxymethylglutaryl-CoA synthase (350 aa).

Residue Glu83 is the Proton donor/acceptor of the active site. Cys115 acts as the Acyl-thioester intermediate in catalysis. (3S)-3-hydroxy-3-methylglutaryl-CoA contacts are provided by Cys115 and Thr156. Residue Arg204 coordinates CoA. 2 residues coordinate (3S)-3-hydroxy-3-methylglutaryl-CoA: Thr206 and His239. His239 acts as the Proton donor/acceptor in catalysis. A CoA-binding site is contributed by Lys244. (3S)-3-hydroxy-3-methylglutaryl-CoA contacts are provided by Asn271 and Ser301.

This sequence belongs to the thiolase-like superfamily. Archaeal HMG-CoA synthase family. In terms of assembly, interacts with acetoacetyl-CoA thiolase that catalyzes the precedent step in the pathway and with a DUF35 protein. The acetoacetyl-CoA thiolase/HMG-CoA synthase complex channels the intermediate via a fused CoA-binding site, which allows for efficient coupling of the endergonic thiolase reaction with the exergonic HMGCS reaction.

The enzyme catalyses acetoacetyl-CoA + acetyl-CoA + H2O = (3S)-3-hydroxy-3-methylglutaryl-CoA + CoA + H(+). It functions in the pathway metabolic intermediate biosynthesis; (R)-mevalonate biosynthesis; (R)-mevalonate from acetyl-CoA: step 2/3. Catalyzes the condensation of acetyl-CoA with acetoacetyl-CoA to form 3-hydroxy-3-methylglutaryl-CoA (HMG-CoA). Functions in the mevalonate (MVA) pathway leading to isopentenyl diphosphate (IPP), a key precursor for the biosynthesis of isoprenoid compounds that are building blocks of archaeal membrane lipids. In Thermococcus kodakarensis (strain ATCC BAA-918 / JCM 12380 / KOD1) (Pyrococcus kodakaraensis (strain KOD1)), this protein is Hydroxymethylglutaryl-CoA synthase.